We begin with the raw amino-acid sequence, 245 residues long: tRNA pseudouridine synthase A (245 aa).

Aspartate 52 functions as the Nucleophile in the catalytic mechanism. Tyrosine 111 lines the substrate pocket.

Belongs to the tRNA pseudouridine synthase TruA family. As to quaternary structure, homodimer.

It carries out the reaction uridine(38/39/40) in tRNA = pseudouridine(38/39/40) in tRNA. In terms of biological role, formation of pseudouridine at positions 38, 39 and 40 in the anticodon stem and loop of transfer RNAs. The chain is tRNA pseudouridine synthase A from Afipia carboxidovorans (strain ATCC 49405 / DSM 1227 / KCTC 32145 / OM5) (Oligotropha carboxidovorans).